Consider the following 334-residue polypeptide: Malate dehydrogenase (334 aa).

16–22 (GAAGQIA) serves as a coordination point for NAD(+). Residues Arg97 and Arg103 each coordinate substrate. Residues Asn110, Gln117, and 134-136 (VGN) each bind NAD(+). The substrate site is built by Asn136 and Arg167. His192 serves as the catalytic Proton acceptor.

The protein belongs to the LDH/MDH superfamily. MDH type 2 family.

It catalyses the reaction (S)-malate + NAD(+) = oxaloacetate + NADH + H(+). Catalyzes the reversible oxidation of malate to oxaloacetate. This chain is Malate dehydrogenase, found in Nocardia farcinica (strain IFM 10152).